A 532-amino-acid polypeptide reads, in one-letter code: Bifunctional purine biosynthesis protein PurH (532 aa).

In terms of domain architecture, MGS-like spans 1–148 (MQTPKPIKRA…KNHKDVTIVV (148 aa)).

The protein belongs to the PurH family.

The enzyme catalyses (6R)-10-formyltetrahydrofolate + 5-amino-1-(5-phospho-beta-D-ribosyl)imidazole-4-carboxamide = 5-formamido-1-(5-phospho-D-ribosyl)imidazole-4-carboxamide + (6S)-5,6,7,8-tetrahydrofolate. It catalyses the reaction IMP + H2O = 5-formamido-1-(5-phospho-D-ribosyl)imidazole-4-carboxamide. It participates in purine metabolism; IMP biosynthesis via de novo pathway; 5-formamido-1-(5-phospho-D-ribosyl)imidazole-4-carboxamide from 5-amino-1-(5-phospho-D-ribosyl)imidazole-4-carboxamide (10-formyl THF route): step 1/1. The protein operates within purine metabolism; IMP biosynthesis via de novo pathway; IMP from 5-formamido-1-(5-phospho-D-ribosyl)imidazole-4-carboxamide: step 1/1. This chain is Bifunctional purine biosynthesis protein PurH, found in Alteromonas mediterranea (strain DSM 17117 / CIP 110805 / LMG 28347 / Deep ecotype).